Here is a 636-residue protein sequence, read N- to C-terminus: Biosynthetic arginine decarboxylase (636 aa).

Residue K101 is modified to N6-(pyridoxal phosphate)lysine. 286–296 (FDVGGGLAVDY) is a substrate binding site.

It belongs to the Orn/Lys/Arg decarboxylase class-II family. SpeA subfamily. Mg(2+) is required as a cofactor. It depends on pyridoxal 5'-phosphate as a cofactor.

It carries out the reaction L-arginine + H(+) = agmatine + CO2. It functions in the pathway amine and polyamine biosynthesis; agmatine biosynthesis; agmatine from L-arginine: step 1/1. Functionally, catalyzes the biosynthesis of agmatine from arginine. This is Biosynthetic arginine decarboxylase from Shewanella denitrificans (strain OS217 / ATCC BAA-1090 / DSM 15013).